A 193-amino-acid polypeptide reads, in one-letter code: Probable gluconokinase (193 aa).

Residue 21-28 (GPAGSGKT) participates in ATP binding.

It belongs to the gluconokinase GntK/GntV family.

The catalysed reaction is D-gluconate + ATP = 6-phospho-D-gluconate + ADP + H(+). It functions in the pathway carbohydrate acid metabolism; D-gluconate degradation. This is Probable gluconokinase from Schizosaccharomyces pombe (strain 972 / ATCC 24843) (Fission yeast).